The following is a 218-amino-acid chain: Probable nicotinate-nucleotide adenylyltransferase (218 aa).

It belongs to the NadD family.

The enzyme catalyses nicotinate beta-D-ribonucleotide + ATP + H(+) = deamido-NAD(+) + diphosphate. It participates in cofactor biosynthesis; NAD(+) biosynthesis; deamido-NAD(+) from nicotinate D-ribonucleotide: step 1/1. Functionally, catalyzes the reversible adenylation of nicotinate mononucleotide (NaMN) to nicotinic acid adenine dinucleotide (NaAD). The polypeptide is Probable nicotinate-nucleotide adenylyltransferase (Halorhodospira halophila (strain DSM 244 / SL1) (Ectothiorhodospira halophila (strain DSM 244 / SL1))).